We begin with the raw amino-acid sequence, 319 residues long: Structure-specific endonuclease subunit SLX1 (319 aa).

Positions 20-103 constitute a GIY-YIG domain; sequence TFYCCYLLQS…QHGYKTHYIP (84 aa). Residues 233 to 297 form an SLX1-type zinc finger; that stretch reads CNLCGQCYDY…LPNFCMCPGC (65 aa).

The protein belongs to the SLX1 family. In terms of assembly, forms a heterodimer with SLX4. It depends on a divalent metal cation as a cofactor.

It is found in the nucleus. In terms of biological role, catalytic subunit of the SLX1-SLX4 structure-specific endonuclease that resolves DNA secondary structures generated during DNA repair and recombination. Has endonuclease activity towards branched DNA substrates, introducing single-strand cuts in duplex DNA close to junctions with ss-DNA. In Vanderwaltozyma polyspora (strain ATCC 22028 / DSM 70294 / BCRC 21397 / CBS 2163 / NBRC 10782 / NRRL Y-8283 / UCD 57-17) (Kluyveromyces polysporus), this protein is Structure-specific endonuclease subunit SLX1.